The following is a 35-amino-acid chain: Purotoxin-1 (35 aa).

4 disulfides stabilise this stretch: cysteine 3–cysteine 16, cysteine 10–cysteine 21, cysteine 15–cysteine 32, and cysteine 23–cysteine 30.

The protein belongs to the neurotoxin 33 family. In terms of tissue distribution, expressed by the venom gland.

The protein resides in the secreted. Its function is as follows. Inhibits P2RX3 receptors. Has an analgesic effect in rat. Enhances the high-affinity desensitization of P2RX3 purinoceptors. At 50 nM, decreases the IC(50) for ambient ATP from 46.5 nM to 12.7 nM in mouse P2RX3. This is Purotoxin-1 from Alopecosa marikovskyi (Wolf spider).